Consider the following 205-residue polypeptide: Proteasome subunit beta (205 aa).

Residues 1-9 (MNQTENMEG) constitute a propeptide, removed in mature form; by autocatalysis. The Nucleophile role is filled by Thr-10.

This sequence belongs to the peptidase T1B family. The 20S proteasome core is composed of 14 alpha and 14 beta subunits that assemble into four stacked heptameric rings, resulting in a barrel-shaped structure. The two inner rings, each composed of seven catalytic beta subunits, are sandwiched by two outer rings, each composed of seven alpha subunits. The catalytic chamber with the active sites is on the inside of the barrel. Has a gated structure, the ends of the cylinder being occluded by the N-termini of the alpha-subunits. Is capped at one or both ends by the proteasome regulatory ATPase, PAN.

It is found in the cytoplasm. The catalysed reaction is Cleavage of peptide bonds with very broad specificity.. The formation of the proteasomal ATPase PAN-20S proteasome complex, via the docking of the C-termini of PAN into the intersubunit pockets in the alpha-rings, triggers opening of the gate for substrate entry. Interconversion between the open-gate and close-gate conformations leads to a dynamic regulation of the 20S proteasome proteolysis activity. In terms of biological role, component of the proteasome core, a large protease complex with broad specificity involved in protein degradation. The polypeptide is Proteasome subunit beta (Methanosphaera stadtmanae (strain ATCC 43021 / DSM 3091 / JCM 11832 / MCB-3)).